The following is a 111-amino-acid chain: Probable 4-amino-4-deoxy-L-arabinose-phosphoundecaprenol flippase subunit ArnE (111 aa).

The Cytoplasmic portion of the chain corresponds to 1–35; that stretch reads MIWLTLVFASLLSVAGQLCQKQATCFATVNKRRKH. A helical transmembrane segment spans residues 36–56; sequence IVLWLGLALACLGLAMVLWLL. Residues 40-109 enclose the EamA domain; sequence LGLALACLGL…IIGGIVILGS (70 aa). At 57-60 the chain is on the periplasmic side; sequence VLQN. Residues 61–81 traverse the membrane as a helical segment; the sequence is VPVGIAYPMLSLNFVWVTLAA. The Cytoplasmic segment spans residues 82–87; that stretch reads VKLWHE. The helical transmembrane segment at 88 to 108 threads the bilayer; the sequence is PVSLRHWCGVAFIIGGIVILG. Residues 109–111 are Periplasmic-facing; that stretch reads STV.

It belongs to the ArnE family. In terms of assembly, heterodimer of ArnE and ArnF.

The protein resides in the cell inner membrane. It functions in the pathway bacterial outer membrane biogenesis; lipopolysaccharide biosynthesis. Its function is as follows. Translocates 4-amino-4-deoxy-L-arabinose-phosphoundecaprenol (alpha-L-Ara4N-phosphoundecaprenol) from the cytoplasmic to the periplasmic side of the inner membrane. This is Probable 4-amino-4-deoxy-L-arabinose-phosphoundecaprenol flippase subunit ArnE from Escherichia coli O6:H1 (strain CFT073 / ATCC 700928 / UPEC).